We begin with the raw amino-acid sequence, 1308 residues long: Limbin (1308 aa).

Positions 1–26 (MDPSGSRGRPTWVLAGGLLAVALALG) are cleaved as a signal peptide. Residues 27 to 300 (GRGCLGASSR…VLPHHGLHAA (274 aa)) are Extracellular-facing. Positions 36–76 (RPRWRPLGAQPPRDPQVAPRSGPGLRIPPGRSGAGPESSTQ) are disordered. An N-linked (GlcNAc...) asparagine glycan is attached at Asn-220. The helical transmembrane segment at 301–321 (GFFIAFLLSLVLTWAALFLMV) threads the bilayer. The Cytoplasmic portion of the chain corresponds to 322-1308 (RYQCLKGNML…KKAMRALGMD (987 aa)). Coiled coils occupy residues 455 to 578 (TAEC…ELMD), 636 to 800 (DQME…DRDQ), and 1001 to 1113 (ASEM…EADT). A compositionally biased stretch (basic and acidic residues) spans 784–801 (MAARAEQLEGEERDRDQE). Residues 784 to 816 (MAARAEQLEGEERDRDQEGVQSVRQRLKDDAPE) are disordered.

As to quaternary structure, component of the EvC complex composed of EFCAB7, IQCE, EVC2 and EVC; built from two subcomplexes, EVC2:EVC and EFCAB7:IQCE. Interacts with EVC. Interacts (via N-terminal end) with EFCAB7. Interacts (via N-terminal end) with IQCE. In terms of tissue distribution, found in the heart, placenta, lung, liver, skeletal muscle, kidney and pancreas.

Its subcellular location is the cell membrane. It localises to the cytoplasm. The protein resides in the cytoskeleton. It is found in the cilium basal body. The protein localises to the cell projection. Its subcellular location is the cilium. It localises to the cilium membrane. The protein resides in the nucleus. Component of the EvC complex that positively regulates ciliary Hedgehog (Hh) signaling. Plays a critical role in bone formation and skeletal development. May be involved in early embryonic morphogenesis. This is Limbin (EVC2) from Homo sapiens (Human).